Consider the following 347-residue polypeptide: D-alanine--D-alanine ligase (347 aa).

The region spanning 131-333 (KRVLESAGIA…YPELIERLVD (203 aa)) is the ATP-grasp domain. Position 161–216 (161–216 (EEKLAYPVFTKPSNMGSSVGISKSENQEELRQALELAFRYDSRVLVEQGVNAREIE)) interacts with ATP. D287, E300, and N302 together coordinate Mg(2+).

The protein belongs to the D-alanine--D-alanine ligase family. The cofactor is Mg(2+). Mn(2+) serves as cofactor.

It is found in the cytoplasm. The catalysed reaction is 2 D-alanine + ATP = D-alanyl-D-alanine + ADP + phosphate + H(+). The protein operates within cell wall biogenesis; peptidoglycan biosynthesis. Functionally, cell wall formation. The polypeptide is D-alanine--D-alanine ligase (Streptococcus pneumoniae (strain CGSP14)).